A 679-amino-acid chain; its full sequence is DNA ligase (679 aa).

Residues 43-47, 92-93, and E124 contribute to the NAD(+) site; these read DYVYD and SM. The N6-AMP-lysine intermediate role is filled by K126. The NAD(+) site is built by R147, E181, K297, and K321. Zn(2+)-binding residues include C415, C418, C433, and C438. The BRCT domain occupies 599–679; that stretch reads TESAEWAGKR…RFDQAMKEEN (81 aa).

Belongs to the NAD-dependent DNA ligase family. LigA subfamily. Mg(2+) serves as cofactor. Requires Mn(2+) as cofactor.

The enzyme catalyses NAD(+) + (deoxyribonucleotide)n-3'-hydroxyl + 5'-phospho-(deoxyribonucleotide)m = (deoxyribonucleotide)n+m + AMP + beta-nicotinamide D-nucleotide.. Its function is as follows. DNA ligase that catalyzes the formation of phosphodiester linkages between 5'-phosphoryl and 3'-hydroxyl groups in double-stranded DNA using NAD as a coenzyme and as the energy source for the reaction. It is essential for DNA replication and repair of damaged DNA. This Limosilactobacillus fermentum (strain NBRC 3956 / LMG 18251) (Lactobacillus fermentum) protein is DNA ligase.